The primary structure comprises 156 residues: Large ribosomal subunit protein uL15 (156 aa).

Over residues 1–16 the composition is skewed to basic residues; sequence MVRRFKRGTKYRRGSR. The interval 1–37 is disordered; that stretch reads MVRRFKRGTKYRRGSRTHGWGRVGQHRKSGGSGGKGM.

It belongs to the universal ribosomal protein uL15 family. As to quaternary structure, part of the 50S ribosomal subunit.

In terms of biological role, binds to the 23S rRNA. The chain is Large ribosomal subunit protein uL15 from Pyrobaculum aerophilum (strain ATCC 51768 / DSM 7523 / JCM 9630 / CIP 104966 / NBRC 100827 / IM2).